The sequence spans 180 residues: Large ribosomal subunit protein uL5 (180 aa).

Belongs to the universal ribosomal protein uL5 family. As to quaternary structure, part of the 50S ribosomal subunit; part of the 5S rRNA/L5/L18/L25 subcomplex. Contacts the 5S rRNA and the P site tRNA. Forms a bridge to the 30S subunit in the 70S ribosome.

This is one of the proteins that bind and probably mediate the attachment of the 5S RNA into the large ribosomal subunit, where it forms part of the central protuberance. In the 70S ribosome it contacts protein S13 of the 30S subunit (bridge B1b), connecting the 2 subunits; this bridge is implicated in subunit movement. Contacts the P site tRNA; the 5S rRNA and some of its associated proteins might help stabilize positioning of ribosome-bound tRNAs. This chain is Large ribosomal subunit protein uL5, found in Streptococcus sanguinis (strain SK36).